A 239-amino-acid chain; its full sequence is Large ribosomal subunit protein uL1 (239 aa).

This sequence belongs to the universal ribosomal protein uL1 family. Part of the 50S ribosomal subunit.

Functionally, binds directly to 23S rRNA. The L1 stalk is quite mobile in the ribosome, and is involved in E site tRNA release. Protein L1 is also a translational repressor protein, it controls the translation of the L11 operon by binding to its mRNA. This Rickettsia conorii (strain ATCC VR-613 / Malish 7) protein is Large ribosomal subunit protein uL1.